A 253-amino-acid chain; its full sequence is Uroplakin-3b-like protein 1 (253 aa).

Positions 1 to 26 (MGLGRGQSPLLMALLLLLACLQMGMS) are cleaved as a signal peptide. Over 27–194 (LERISYVPQL…PGPQTAGTVV (168 aa)) the chain is Extracellular. 2 N-linked (GlcNAc...) asparagine glycosylation sites follow: N78 and N130. A helical membrane pass occupies residues 195–215 (IIAILSVLLAVLLAALLALLI). At 216 to 253 (FTWYDTCGSTPISGPGELVFVRKYDTHHMSRPSTVGGS) the chain is on the cytoplasmic side.

Belongs to the uroplakin-3 family.

It localises to the membrane. This is Uroplakin-3b-like protein 1 from Bos taurus (Bovine).